The primary structure comprises 146 residues: MRNEMNLQFSALSQNESFARVHRAAFIAQLDPTMEELTEIKTVVSEAVTNAIIHGYEGNAEGIVYISVILEEAMVKLTIRDEGIGIFNLDEARQPLFTTKPELERSGMGFTIMENFMDEVEVISNESFGTTIHLTKYLSNSNALCN.

It belongs to the anti-sigma-factor family.

The enzyme catalyses L-seryl-[protein] + ATP = O-phospho-L-seryl-[protein] + ADP + H(+). It carries out the reaction L-threonyl-[protein] + ATP = O-phospho-L-threonyl-[protein] + ADP + H(+). Functionally, binds to sigma F and blocks its ability to form an RNA polymerase holoenzyme (E-sigma F). Phosphorylates SpoIIAA on a serine residue. This phosphorylation may enable SpoIIAA to act as an anti-anti-sigma factor that counteracts SpoIIAB and thus releases sigma F from inhibition. The protein is Anti-sigma F factor of Bacillus cereus (strain ATCC 14579 / DSM 31 / CCUG 7414 / JCM 2152 / NBRC 15305 / NCIMB 9373 / NCTC 2599 / NRRL B-3711).